The chain runs to 83 residues: U-actitoxin-Aeq6b (83 aa).

The N-terminal stretch at 1–20 (MIYKAVFVCLVLVLLGDVFC) is a signal peptide. Residues 21–36 (SPRNSGGGTLNDNPFE) constitute a propeptide that is removed on maturation. The residue at position 82 (P82) is a Proline amide.

Contains 3 disulfide bonds. Expressed by acrorhagi.

Its subcellular location is the secreted. The protein localises to the nematocyst. Its function is as follows. Toxin. This Actinia equina (Beadlet anemone) protein is U-actitoxin-Aeq6b.